Here is a 538-residue protein sequence, read N- to C-terminus: AAA ATPase forming ring-shaped complexes (538 aa).

Positions 14-54 (ARELRLANHRLGAQNEKLTEALKASREKLAEINSRLADMAE) form a coiled coil. 240–245 (GNGKTL) contributes to the ATP binding site.

The protein belongs to the AAA ATPase family. As to quaternary structure, homohexamer. Assembles into a hexameric ring structure.

In Corynebacterium urealyticum (strain ATCC 43042 / DSM 7109), this protein is AAA ATPase forming ring-shaped complexes.